The chain runs to 494 residues: Glycerol kinase (494 aa).

Residue Thr13 participates in ADP binding. The ATP site is built by Thr13, Thr14, and Ser15. Thr13 provides a ligand contact to sn-glycerol 3-phosphate. Arg17 contacts ADP. Positions 83, 84, 135, and 244 each coordinate sn-glycerol 3-phosphate. Arg83, Glu84, Tyr135, Asp244, and Gln245 together coordinate glycerol. Positions 266 and 309 each coordinate ADP. ATP contacts are provided by Thr266, Gly309, Gln313, and Gly410. Gly410 and Asn414 together coordinate ADP.

Belongs to the FGGY kinase family.

The enzyme catalyses glycerol + ATP = sn-glycerol 3-phosphate + ADP + H(+). The protein operates within polyol metabolism; glycerol degradation via glycerol kinase pathway; sn-glycerol 3-phosphate from glycerol: step 1/1. Its activity is regulated as follows. Inhibited by fructose 1,6-bisphosphate (FBP). Key enzyme in the regulation of glycerol uptake and metabolism. Catalyzes the phosphorylation of glycerol to yield sn-glycerol 3-phosphate. This chain is Glycerol kinase, found in Shewanella sp. (strain MR-7).